We begin with the raw amino-acid sequence, 394 residues long: Glycerol-1-phosphate dehydrogenase [NAD(P)+] (394 aa).

Residues Asp-54, 116–120 (GTIHD), and 138–141 (TAPS) each bind NAD(+). A substrate-binding site is contributed by Asp-143. Ser-147 lines the NAD(+) pocket. Asp-190 lines the substrate pocket. Ni(2+)-binding residues include Asp-190 and His-270. His-274 is a binding site for substrate. Residue His-290 coordinates Ni(2+).

The protein belongs to the glycerol-1-phosphate dehydrogenase family. In terms of assembly, homodimer. The cofactor is Ni(2+).

It is found in the cytoplasm. The catalysed reaction is sn-glycerol 1-phosphate + NAD(+) = dihydroxyacetone phosphate + NADH + H(+). It catalyses the reaction sn-glycerol 1-phosphate + NADP(+) = dihydroxyacetone phosphate + NADPH + H(+). Functionally, catalyzes the NAD(P)H-dependent reduction of dihydroxyacetonephosphate (DHAP or glycerone phosphate) to glycerol 1-phosphate (G1P). The G1P thus generated is probably used for the synthesis of phosphoglycerolipids in Gram-positive bacterial species. This Bacillus velezensis (strain DSM 23117 / BGSC 10A6 / LMG 26770 / FZB42) (Bacillus amyloliquefaciens subsp. plantarum) protein is Glycerol-1-phosphate dehydrogenase [NAD(P)+].